A 905-amino-acid polypeptide reads, in one-letter code: Cation-transporting ATPase pma1 (905 aa).

A run of 4 helical transmembrane segments spans residues 60-80 (FLLQFHQPLLYILLIAGTVKA), 81-101 (FLGSWTNAWVIWGVTLVNAII), 248-268 (FSHTLLYVIVTLAAFTFAVGW), and 283-303 (ALAVSAIPEGLPAVVTVTLAI). Asp333 (4-aspartylphosphate intermediate) is an active-site residue. The next 5 membrane-spanning stretches (helical) occupy residues 716 to 736 (ILISVLLALNLPILSLQVLWL), 774 to 794 (LLHRILLVSLFNWILIFGMFE), 809 to 829 (MAIQALVAARVIYLLSISQLG), 848 to 868 (ILLLGIAVAIALQIGFSQLPF), and 880 to 900 (WQQWAICLLPMIPMVPVAILA).

The protein belongs to the cation transport ATPase (P-type) (TC 3.A.3) family. Type IIA subfamily.

The protein resides in the cell membrane. It catalyses the reaction ATP + H2O = ADP + phosphate + H(+). Its function is as follows. Could mediate calcium influx. This is Cation-transporting ATPase pma1 (pma1) from Synechocystis sp. (strain ATCC 27184 / PCC 6803 / Kazusa).